Reading from the N-terminus, the 304-residue chain is Proline dehydrogenase 2 (304 aa).

Lys97 contacts substrate. Asp131 is a catalytic residue. Residues Met132 and Gln160 each coordinate FAD. The active site involves Arg181. Residues 184 to 186 and 223 to 224 contribute to the FAD site; these read KGA and TH. 285 to 286 provides a ligand contact to substrate; it reads RR.

Belongs to the proline dehydrogenase family. The cofactor is FAD.

It catalyses the reaction L-proline + a quinone = (S)-1-pyrroline-5-carboxylate + a quinol + H(+). It functions in the pathway amino-acid degradation; L-proline degradation into L-glutamate; L-glutamate from L-proline: step 1/2. Converts proline to delta-1-pyrroline-5-carboxylate. This Bacillus subtilis subsp. natto protein is Proline dehydrogenase 2.